The chain runs to 124 residues: Small ribosomal subunit protein uS12 (124 aa).

A 3-methylthioaspartic acid modification is found at Asp89.

It belongs to the universal ribosomal protein uS12 family. As to quaternary structure, part of the 30S ribosomal subunit. Contacts proteins S8 and S17. May interact with IF1 in the 30S initiation complex.

Its function is as follows. With S4 and S5 plays an important role in translational accuracy. In terms of biological role, interacts with and stabilizes bases of the 16S rRNA that are involved in tRNA selection in the A site and with the mRNA backbone. Located at the interface of the 30S and 50S subunits, it traverses the body of the 30S subunit contacting proteins on the other side and probably holding the rRNA structure together. The combined cluster of proteins S8, S12 and S17 appears to hold together the shoulder and platform of the 30S subunit. The protein is Small ribosomal subunit protein uS12 of Klebsiella pneumoniae (strain 342).